The sequence spans 150 residues: UPF0260 protein VIBHAR_03078 (150 aa).

The protein belongs to the UPF0260 family.

This Vibrio campbellii (strain ATCC BAA-1116) protein is UPF0260 protein VIBHAR_03078.